The chain runs to 373 residues: Dual-specificity RNA methyltransferase RlmN (373 aa).

Glu94 acts as the Proton acceptor in catalysis. The Radical SAM core domain occupies 100–339; the sequence is EDDRATLCVS…VIVRKTRGDD (240 aa). Cys107 and Cys344 are oxidised to a cystine. [4Fe-4S] cluster-binding residues include Cys114, Cys118, and Cys121. Residues 168–169, Ser200, 222–224, and Asn301 each bind S-adenosyl-L-methionine; these read GE and SIH. The active-site S-methylcysteine intermediate is Cys344.

This sequence belongs to the radical SAM superfamily. RlmN family. The cofactor is [4Fe-4S] cluster.

It is found in the cytoplasm. It carries out the reaction adenosine(2503) in 23S rRNA + 2 reduced [2Fe-2S]-[ferredoxin] + 2 S-adenosyl-L-methionine = 2-methyladenosine(2503) in 23S rRNA + 5'-deoxyadenosine + L-methionine + 2 oxidized [2Fe-2S]-[ferredoxin] + S-adenosyl-L-homocysteine. It catalyses the reaction adenosine(37) in tRNA + 2 reduced [2Fe-2S]-[ferredoxin] + 2 S-adenosyl-L-methionine = 2-methyladenosine(37) in tRNA + 5'-deoxyadenosine + L-methionine + 2 oxidized [2Fe-2S]-[ferredoxin] + S-adenosyl-L-homocysteine. Its function is as follows. Specifically methylates position 2 of adenine 2503 in 23S rRNA and position 2 of adenine 37 in tRNAs. m2A2503 modification seems to play a crucial role in the proofreading step occurring at the peptidyl transferase center and thus would serve to optimize ribosomal fidelity. The protein is Dual-specificity RNA methyltransferase RlmN of Shewanella sp. (strain MR-4).